A 66-amino-acid polypeptide reads, in one-letter code: Vesicular acetylcholine transporter (66 aa).

A helical transmembrane segment spans residues glycine 1–leucine 15. The Cytoplasmic segment spans residues leucine 16–aspartate 66. The disordered stretch occupies residues alanine 43–aspartate 66.

It belongs to the major facilitator superfamily. Vesicular transporter family. As to quaternary structure, interacts with SEC14L1.

It is found in the cytoplasmic vesicle. The protein resides in the secretory vesicle. Its subcellular location is the synaptic vesicle membrane. It catalyses the reaction acetylcholine(out) + 2 H(+)(in) = acetylcholine(in) + 2 H(+)(out). The catalysed reaction is choline(in) + 2 H(+)(out) = choline(out) + 2 H(+)(in). The enzyme catalyses serotonin(in) + 2 H(+)(out) = serotonin(out) + 2 H(+)(in). Electrogenic antiporter that exchanges one cholinergic neurotransmitter, acetylcholine or choline, with two intravesicular protons across the membrane of synaptic vesicles. Uses the electrochemical proton gradient established by the V-type proton-pump ATPase to store neurotransmitters inside the vesicles prior to their release via exocytosis. Determines cholinergic vesicular quantal size at presynaptic nerve terminals in developing neuro-muscular junctions with an impact on motor neuron differentiation and innervation pattern. Part of forebrain cholinergic system, regulates hippocampal synapse transmissions that underlie spatial memory formation. Can transport serotonin. The polypeptide is Vesicular acetylcholine transporter (SLC18A3) (Macaca fuscata fuscata (Japanese macaque)).